The chain runs to 158 residues: Transcription elongation factor GreA (158 aa).

Residues 2 to 70 (ENQKQYPMTQ…IEQDIQRIEH (69 aa)) adopt a coiled-coil conformation.

This sequence belongs to the GreA/GreB family.

Necessary for efficient RNA polymerase transcription elongation past template-encoded arresting sites. The arresting sites in DNA have the property of trapping a certain fraction of elongating RNA polymerases that pass through, resulting in locked ternary complexes. Cleavage of the nascent transcript by cleavage factors such as GreA or GreB allows the resumption of elongation from the new 3'terminus. GreA releases sequences of 2 to 3 nucleotides. This chain is Transcription elongation factor GreA, found in Staphylococcus epidermidis (strain ATCC 35984 / DSM 28319 / BCRC 17069 / CCUG 31568 / BM 3577 / RP62A).